A 370-amino-acid polypeptide reads, in one-letter code: Mitochondrial carrier protein SCaMC-3L (370 aa).

Solcar repeat units follow at residues 90–176 (EALW…CKNY), 184–269 (PPFQ…LQCF), and 280–367 (PSGL…MKKT). A run of 6 helical transmembrane segments spans residues 96–113 (LLSG…TAPL), 151–170 (GNGI…FSVF), 194–207 (SLAV…INPM), 245–263 (YLPN…LAVY), 282–306 (GLVS…LTLV), and 342–361 (GMTP…YVVY).

It belongs to the mitochondrial carrier (TC 2.A.29) family.

It localises to the mitochondrion inner membrane. The catalysed reaction is Mg(2+)(out) + phosphate(in) + ATP(out) = Mg(2+)(in) + phosphate(out) + ATP(in). It catalyses the reaction ADP(out) + phosphate(in) + H(+)(out) = ADP(in) + phosphate(out) + H(+)(in). Its function is as follows. Calcium-independent ATP-Mg/Pi exchanger that catalyzes the electroneutral exchange of Mg-ATP or free ADP against an hydrogenphosphate and participates in the net transport of adenine nucleotides across the mitochondria inner membrane. The chain is Mitochondrial carrier protein SCaMC-3L from Homo sapiens (Human).